A 445-amino-acid polypeptide reads, in one-letter code: Xylose isomerase (445 aa).

Active-site residues include His107 and Asp110. Glu238, Glu274, His277, Asp302, Asp313, Asp315, and Asp345 together coordinate Mg(2+).

The protein belongs to the xylose isomerase family. Homotetramer. Mg(2+) serves as cofactor.

The protein localises to the cytoplasm. It carries out the reaction alpha-D-xylose = alpha-D-xylulofuranose. This is Xylose isomerase from Bacillus velezensis (strain DSM 23117 / BGSC 10A6 / LMG 26770 / FZB42) (Bacillus amyloliquefaciens subsp. plantarum).